Here is a 267-residue protein sequence, read N- to C-terminus: Phosphatidylglycerol--prolipoprotein diacylglyceryl transferase (267 aa).

3 helical membrane-spanning segments follow: residues 21 to 41 (VSLH…YWLG), 60 to 80 (LLFN…VFFY), and 95 to 115 (IWEG…AMLW). A 1,2-diacyl-sn-glycero-3-phospho-(1'-sn-glycerol) is bound at residue R143. The next 2 membrane-spanning stretches (helical) occupy residues 203 to 223 (GSVA…VEYF) and 240 to 260 (GQLL…VAYY).

The protein belongs to the Lgt family.

The protein localises to the cell inner membrane. The enzyme catalyses L-cysteinyl-[prolipoprotein] + a 1,2-diacyl-sn-glycero-3-phospho-(1'-sn-glycerol) = an S-1,2-diacyl-sn-glyceryl-L-cysteinyl-[prolipoprotein] + sn-glycerol 1-phosphate + H(+). Its pathway is protein modification; lipoprotein biosynthesis (diacylglyceryl transfer). Functionally, catalyzes the transfer of the diacylglyceryl group from phosphatidylglycerol to the sulfhydryl group of the N-terminal cysteine of a prolipoprotein, the first step in the formation of mature lipoproteins. The polypeptide is Phosphatidylglycerol--prolipoprotein diacylglyceryl transferase (Glaesserella parasuis serovar 5 (strain SH0165) (Haemophilus parasuis)).